The primary structure comprises 205 residues: Holliday junction branch migration complex subunit RuvA (205 aa).

The domain I stretch occupies residues 1 to 65 (MIAKLKGILD…EDRIHLFGFL (65 aa)). A domain II region spans residues 66–144 (DNTEKVAFNM…NINTIANNTS (79 aa)). The flexible linker stretch occupies residues 145-153 (LAILSTDSN). Positions 154 to 205 (THDNILSDAITALIALGISRAEATQILSDIYALFPSISVNELVRTALQRRAK) are domain III.

The protein belongs to the RuvA family. Homotetramer. Forms an RuvA(8)-RuvB(12)-Holliday junction (HJ) complex. HJ DNA is sandwiched between 2 RuvA tetramers; dsDNA enters through RuvA and exits via RuvB. An RuvB hexamer assembles on each DNA strand where it exits the tetramer. Each RuvB hexamer is contacted by two RuvA subunits (via domain III) on 2 adjacent RuvB subunits; this complex drives branch migration. In the full resolvosome a probable DNA-RuvA(4)-RuvB(12)-RuvC(2) complex forms which resolves the HJ.

The protein resides in the cytoplasm. Its function is as follows. The RuvA-RuvB-RuvC complex processes Holliday junction (HJ) DNA during genetic recombination and DNA repair, while the RuvA-RuvB complex plays an important role in the rescue of blocked DNA replication forks via replication fork reversal (RFR). RuvA specifically binds to HJ cruciform DNA, conferring on it an open structure. The RuvB hexamer acts as an ATP-dependent pump, pulling dsDNA into and through the RuvAB complex. HJ branch migration allows RuvC to scan DNA until it finds its consensus sequence, where it cleaves and resolves the cruciform DNA. The polypeptide is Holliday junction branch migration complex subunit RuvA (Orientia tsutsugamushi (strain Boryong) (Rickettsia tsutsugamushi)).